A 244-amino-acid polypeptide reads, in one-letter code: MAAEKILTPESQLKKSKAQQKTAEQVAAERAARKAANKEKRAIILERNAAYQKEYETAERNIIQAKRDAKAAGSYYVEAQHKLVFVVRIKGINKIPPKPRKVLQLLRLTRINSGTFVKVTKATLELLKLIEPYVAYGYPSYSTIRQLVYKRGFGKINKQRVPLSDNAIIEANLGKYGILSIDDLIHEIITVGPHFKQANNFLWPFKLSNPSGGWGVPRKFKHFIQGGSFGNREEFINKLVKSMN.

The tract at residues 1 to 26 is disordered; it reads MAAEKILTPESQLKKSKAQQKTAEQV.

It belongs to the universal ribosomal protein uL30 family. As to quaternary structure, component of the large ribosomal subunit (LSU). Mature yeast ribosomes consist of a small (40S) and a large (60S) subunit. The 40S small subunit contains 1 molecule of ribosomal RNA (18S rRNA) and 33 different proteins (encoded by 57 genes). The large 60S subunit contains 3 rRNA molecules (25S, 5.8S and 5S rRNA) and 46 different proteins (encoded by 81 genes).

The protein resides in the cytoplasm. In terms of biological role, component of the ribosome, a large ribonucleoprotein complex responsible for the synthesis of proteins in the cell. The small ribosomal subunit (SSU) binds messenger RNAs (mRNAs) and translates the encoded message by selecting cognate aminoacyl-transfer RNA (tRNA) molecules. The large subunit (LSU) contains the ribosomal catalytic site termed the peptidyl transferase center (PTC), which catalyzes the formation of peptide bonds, thereby polymerizing the amino acids delivered by tRNAs into a polypeptide chain. The nascent polypeptides leave the ribosome through a tunnel in the LSU and interact with protein factors that function in enzymatic processing, targeting, and the membrane insertion of nascent chains at the exit of the ribosomal tunnel. The protein is Large ribosomal subunit protein uL30A of Saccharomyces cerevisiae (strain ATCC 204508 / S288c) (Baker's yeast).